Reading from the N-terminus, the 698-residue chain is Elongation factor G (698 aa).

One can recognise a tr-type G domain in the interval 10 to 285 (ASTRNIGIMA…AVVDFLPNPL (276 aa)). GTP is bound by residues 19 to 26 (AHIDAGKT), 83 to 87 (DTPGH), and 137 to 140 (NKMD).

The protein belongs to the TRAFAC class translation factor GTPase superfamily. Classic translation factor GTPase family. EF-G/EF-2 subfamily.

The protein resides in the cytoplasm. Catalyzes the GTP-dependent ribosomal translocation step during translation elongation. During this step, the ribosome changes from the pre-translocational (PRE) to the post-translocational (POST) state as the newly formed A-site-bound peptidyl-tRNA and P-site-bound deacylated tRNA move to the P and E sites, respectively. Catalyzes the coordinated movement of the two tRNA molecules, the mRNA and conformational changes in the ribosome. This is Elongation factor G from Frankia alni (strain DSM 45986 / CECT 9034 / ACN14a).